The primary structure comprises 85 residues: Depressant scorpion toxin BmKIM (85 aa).

The first 21 residues, 1–21 (MKLFLLLVFFASMLIDGLVNA), serve as a signal peptide directing secretion. One can recognise an LCN-type CS-alpha/beta domain in the interval 22-82 (DGYIRGSNGC…TWKSESNTCG (61 aa)). Cystine bridges form between cysteine 31–cysteine 81, cysteine 35–cysteine 56, cysteine 42–cysteine 63, and cysteine 46–cysteine 65. Residue glycine 82 is modified to Glycine amide.

The protein belongs to the long (4 C-C) scorpion toxin superfamily. Sodium channel inhibitor family. As to expression, expressed by the venom gland.

Its subcellular location is the secreted. Its function is as follows. Causes a slow progressive depressant flaccid paralysis, when injected into S.falculata blowfly larvae. Inhibits dose-dependently the total sodium (Nav) currents both in dorsal root ganglia neurons and in ventricular myocytes. Is toxic to mice by intravenous injection, but not by subcutaneous or intracerebroventricular injection. Produces antiarrhythmia in rat. Is then active on both mammals and insects. This is Depressant scorpion toxin BmKIM (KIM2) from Olivierus martensii (Manchurian scorpion).